We begin with the raw amino-acid sequence, 1249 residues long: Protein transport protein Sec31A (1249 aa).

7 WD repeats span residues lysine 4–glutamate 47, serine 64–lysine 111, lysine 120–threonine 160, glutamine 166–lysine 206, aspartate 209–arginine 254, asparagine 258–glutamate 298, and threonine 301–arginine 342. The tract at residues proline 161 to lysine 470 is interaction with SEC13. The WD 8; interaction with SEC13 repeat unit spans residues serine 397 to serine 429. At arginine 423 the chain carries Asymmetric dimethylarginine. A phosphoserine mark is found at serine 526 and serine 531. A Glycyl lysine isopeptide (Lys-Gly) (interchain with G-Cter in ubiquitin) cross-link involves residue lysine 647. Disordered stretches follow at residues glutamine 790–glutamine 829, threonine 842–asparagine 940, and proline 954–asparagine 1123. Polar residues predominate over residues glycine 796–glutamate 805. Residue serine 799 is modified to Phosphoserine. Residues serine 800–proline 1142 are interaction with PDCD6. Residues glycine 873 to asparagine 879 carry the ALG-2-binding site motif-2 (ABS-2) motif. Pro residues predominate over residues glutamine 898–tyrosine 908. 2 stretches are compositionally biased toward low complexity: residues proline 961–alanine 970 and proline 991–proline 1007. A compositionally biased stretch (polar residues) spans proline 1013–tryptophan 1024. Over residues proline 1056–proline 1074 the composition is skewed to low complexity. Phosphothreonine is present on threonine 1190. The residue at position 1192 (serine 1192) is a Phosphoserine. Lysine 1246 participates in a covalent cross-link: Glycyl lysine isopeptide (Lys-Gly) (interchain with G-Cter in ubiquitin).

The protein belongs to the WD repeat SEC31 family. COPII is composed of at least 5 proteins: the SEC23/24 complex, the SEC13/31 complex and SAR1. SEC13 and SEC31 make a 2:2 tetramer that forms the edge element of the COPII outer coat. The tetramer self-assembles in multiple copies to form the complete polyhedral cage. Interacts (via WD 8) with SEC13. Interacts with PDCD6; interaction takes place in response to cytosolic calcium increase and leads to bridge together the BCR(KLHL12) complex and SEC31A, leading to monoubiquitination. Interacts with KLHL12. In terms of processing, monoubiquitinated by the BCR(KLHL12) E3 ubiquitin ligase complex, leading to regulate the size of COPII coats. As to expression, ubiquitously expressed.

The protein resides in the cytoplasm. Its subcellular location is the cytoplasmic vesicle. The protein localises to the COPII-coated vesicle membrane. It is found in the endoplasmic reticulum membrane. Functionally, component of the coat protein complex II (COPII) which promotes the formation of transport vesicles from the endoplasmic reticulum (ER). The coat has two main functions, the physical deformation of the endoplasmic reticulum membrane into vesicles and the selection of cargo molecules. The polypeptide is Protein transport protein Sec31A (Sec31a) (Rattus norvegicus (Rat)).